A 397-amino-acid chain; its full sequence is Dual-specificity RNA methyltransferase RlmN (397 aa).

Residue glutamate 120 is the Proton acceptor of the active site. One can recognise a Radical SAM core domain in the interval glutamate 126–leucine 369. A disulfide bond links cysteine 133 and cysteine 372. [4Fe-4S] cluster is bound by residues cysteine 140, cysteine 144, and cysteine 147. S-adenosyl-L-methionine contacts are provided by residues glycine 198–glutamate 199, serine 230, serine 252–histidine 254, and asparagine 329. The active-site S-methylcysteine intermediate is the cysteine 372.

The protein belongs to the radical SAM superfamily. RlmN family. Requires [4Fe-4S] cluster as cofactor.

It localises to the cytoplasm. The enzyme catalyses adenosine(2503) in 23S rRNA + 2 reduced [2Fe-2S]-[ferredoxin] + 2 S-adenosyl-L-methionine = 2-methyladenosine(2503) in 23S rRNA + 5'-deoxyadenosine + L-methionine + 2 oxidized [2Fe-2S]-[ferredoxin] + S-adenosyl-L-homocysteine. It carries out the reaction adenosine(37) in tRNA + 2 reduced [2Fe-2S]-[ferredoxin] + 2 S-adenosyl-L-methionine = 2-methyladenosine(37) in tRNA + 5'-deoxyadenosine + L-methionine + 2 oxidized [2Fe-2S]-[ferredoxin] + S-adenosyl-L-homocysteine. In terms of biological role, specifically methylates position 2 of adenine 2503 in 23S rRNA and position 2 of adenine 37 in tRNAs. m2A2503 modification seems to play a crucial role in the proofreading step occurring at the peptidyl transferase center and thus would serve to optimize ribosomal fidelity. This chain is Dual-specificity RNA methyltransferase RlmN, found in Nitrobacter winogradskyi (strain ATCC 25391 / DSM 10237 / CIP 104748 / NCIMB 11846 / Nb-255).